Reading from the N-terminus, the 713-residue chain is Serine/threonine-protein kinase SSN3 (713 aa).

One can recognise a Protein kinase domain in the interval 66–484 (YTILGFLSSG…ANQALEHAWF (419 aa)). Position 72-80 (72-80 (LSSGTYGRV)) interacts with ATP. The span at 104-120 (NAGTGSGTATVGSGAST) shows a compositional bias: low complexity. A disordered region spans residues 104–188 (NAGTGSGTAT…GGSDNTLQLS (85 aa)). Residues 129–142 (QQHQLLDSPSSSLH) are compositionally biased toward polar residues. Residues 158–175 (GTPSASPSLSASLGTSTA) are compositionally biased toward low complexity. K201 is a binding site for ATP. The active-site Proton acceptor is the D304. The span at 657–672 (SNPATVRSSHSIGSTE) shows a compositional bias: polar residues. The disordered stretch occupies residues 657–713 (SNPATVRSSHSIGSTESITPTTSSQPIPAQPSSAPLARTTNLVATATRNQQRKRQRN). Residues 673-691 (SITPTTSSQPIPAQPSSAP) show a composition bias toward low complexity. The segment covering 694 to 705 (RTTNLVATATRN) has biased composition (polar residues).

The protein belongs to the protein kinase superfamily. CMGC Ser/Thr protein kinase family. CDC2/CDKX subfamily. Component of the srb8-11 complex, a regulatory module of the Mediator complex. Mg(2+) is required as a cofactor.

The protein resides in the nucleus. It catalyses the reaction L-seryl-[protein] + ATP = O-phospho-L-seryl-[protein] + ADP + H(+). The catalysed reaction is L-threonyl-[protein] + ATP = O-phospho-L-threonyl-[protein] + ADP + H(+). The enzyme catalyses [DNA-directed RNA polymerase] + ATP = phospho-[DNA-directed RNA polymerase] + ADP + H(+). In terms of biological role, component of the srb8-11 complex. The srb8-11 complex is a regulatory module of the Mediator complex which is itself dependent transcription. The srb8-11 complex may be involved in the transcriptional repression of a subset of genes regulated by Mediator. It may inhibit the association of the Mediator complex with RNA polymerase II to form the holoenzyme complex. The srb8-11 complex phosphorylates the C-terminal domain (CTD) of the largest subunit of RNA polymerase II. This chain is Serine/threonine-protein kinase SSN3 (SSN3), found in Mycosarcoma maydis (Corn smut fungus).